The chain runs to 95 residues: UPF0235 protein Ssed_1229 (95 aa).

This sequence belongs to the UPF0235 family.

The chain is UPF0235 protein Ssed_1229 from Shewanella sediminis (strain HAW-EB3).